The following is a 544-amino-acid chain: Pyruvate kinase (544 aa).

Arg31 is a binding site for substrate. The K(+) site is built by Asn33 and Asp61. An ATP-binding site is contributed by 33-36 (NSAH). Arg68 contacts ATP. Glu204 is a Mg(2+) binding site. Residues Gly227, Asp228, and Thr260 each coordinate substrate. A Mg(2+)-binding site is contributed by Asp228.

The protein belongs to the pyruvate kinase family. Homotetramer. Mg(2+) serves as cofactor. It depends on K(+) as a cofactor.

It carries out the reaction pyruvate + ATP = phosphoenolpyruvate + ADP + H(+). The protein operates within carbohydrate degradation; glycolysis; pyruvate from D-glyceraldehyde 3-phosphate: step 5/5. The chain is Pyruvate kinase from Thermoplasma acidophilum (strain ATCC 25905 / DSM 1728 / JCM 9062 / NBRC 15155 / AMRC-C165).